A 255-amino-acid polypeptide reads, in one-letter code: Diphthine synthase (255 aa).

Residues Leu-9, Asp-85, Val-88, 113–114, Leu-164, Ala-207, and His-232 each bind S-adenosyl-L-methionine; that span reads SI.

This sequence belongs to the diphthine synthase family. As to quaternary structure, homodimer.

It carries out the reaction 2-[(3S)-amino-3-carboxypropyl]-L-histidyl-[translation elongation factor 2] + 3 S-adenosyl-L-methionine = diphthine-[translation elongation factor 2] + 3 S-adenosyl-L-homocysteine + 3 H(+). It functions in the pathway protein modification; peptidyl-diphthamide biosynthesis. In terms of biological role, S-adenosyl-L-methionine-dependent methyltransferase that catalyzes the trimethylation of the amino group of the modified target histidine residue in translation elongation factor 2 (EF-2), to form an intermediate called diphthine. The three successive methylation reactions represent the second step of diphthamide biosynthesis. The sequence is that of Diphthine synthase from Methanococcus maripaludis (strain C5 / ATCC BAA-1333).